A 457-amino-acid polypeptide reads, in one-letter code: MGKEKTHVNVVVIGHVDSGKSTTTGHLIYKCGGIDKRTIEKFEKEAAELGKGSFKYAWVLDKLKAERERGITIDIALWKFETPKYNVTVIDAPGHRDFIKNMITGTSQADCAILIIAGGTGEFEAGISKDGQTREHALLAFTLGVRQLIVAINKMDTTKWSQDRYNEIVKEVSGFIKKIGFNPKSVPFVPISGWHGDNMLDESTNMPWFKGWNKETKAGSKTGKTLLEAIDAIEPPVRPSDKPLRLPLQDVYKIGGIGTVPVGRVETGTIKAGMVVNFAPAAVTTEVKSVEMHHETLTEGLPGDNVGFNVKNVSVKDIRRGNVCSDSKNDPAKESASFTAQVIILNHPGQISAGYAPVLDCHTAHIACKFSELIEKIDRRSEKMEDSPKFVKSGDSAIVKMVPSKPMCVEAYTDYPPLGRFAVRDMRQTVAVGVIKAVEKVDKAGKVTKAAAKASKK.

Residue G2 is modified to N,N,N-trimethylglycine. Position 3 is an N6,N6-dimethyllysine; alternate (K3). An N6-methyllysine; alternate modification is found at K3. One can recognise a tr-type G domain in the interval 5 to 240 (KTHVNVVVIG…DAIEPPVRPS (236 aa)). Residues 14–21 (GHVDSGKS) are G1. 14–21 (GHVDSGKS) serves as a coordination point for GTP. The residue at position 30 (K30) is an N6-methyllysine. The G2 stretch occupies residues 70 to 74 (GITID). K79 carries the N6,N6,N6-trimethyllysine modification. A G3 region spans residues 91 to 94 (DAPG). GTP is bound by residues 91–95 (DAPGH) and 153–156 (NKMD). The segment at 153–156 (NKMD) is G4. Residues 192–194 (SGW) are G5. K316 carries the N6,N6-dimethyllysine; alternate modification. K316 carries the post-translational modification N6-methyllysine; alternate. Position 389 is an N6-methyllysine (K389).

It belongs to the TRAFAC class translation factor GTPase superfamily. Classic translation factor GTPase family. EF-Tu/EF-1A subfamily.

It localises to the cytoplasm. Its function is as follows. This protein promotes the GTP-dependent binding of aminoacyl-tRNA to the A-site of ribosomes during protein biosynthesis. This chain is Elongation factor 1-alpha (TEF-3), found in Mucor circinelloides f. lusitanicus (Mucor racemosus var. lusitanicus).